Here is a 445-residue protein sequence, read N- to C-terminus: Clusterin (445 aa).

The N-terminal stretch at 1–22 (MMKTLLLLVGLLLTWDNGRVLG) is a signal peptide. The short motif at 78-81 (KKKK) is the Nuclear localization signal element. N-linked (GlcNAc...) asparagine glycosylation is found at N86 and N103. Disulfide bonds link C102/C309, C113/C301, C116/C298, C121/C291, and C129/C281. S133 is subject to Phosphoserine. N-linked (GlcNAc...) asparagine glycosylation is found at N145, N277, N287, N350, and N370. The residue at position 392 (S392) is a Phosphoserine. The Nuclear localization signal motif lies at 439-443 (RQKHR).

The protein belongs to the clusterin family. As to quaternary structure, antiparallel disulfide-linked heterodimer of an alpha chain and a beta chain. Self-associates and forms higher oligomers. Interacts with a broad range of misfolded proteins, including APP, APOC2 and LYZ. Slightly acidic pH promotes interaction with misfolded proteins. Forms high-molecular weight oligomers upon interaction with misfolded proteins. Interacts with APOA1, LRP2, CLUAP1 and PON1. Interacts with the complement membrane attack complex. Interacts (via alpha chain) with XRCC6. Interacts with SYVN1, COMMD1, BTRC, CUL1 and with ubiquitin and SCF (SKP1-CUL1-F-box protein) E3 ubiquitin-protein ligase complexes. Interacts (via alpha chain) with BAX in stressed cells, where BAX undergoes a conformation change leading to association with the mitochondrial membrane. Does not interact with BAX in unstressed cells. Found in a complex with LTF, CLU, EPPIN and SEMG1. Interacts (immaturely glycosylated pre-secreted form) with HSPA5; this interaction promotes CLU stability and facilitates stress-induced CLU retrotranslocation from the secretory pathway to the mitochondria, thereby reducing stress-induced apoptosis by stabilizing mitochondrial membrane integrity. Interacts with BCL2L1; this interaction releases and activates BAX and promotes cell death. Interacts with TGFBR2 and ACVR1. Interacts (secreted form) with STMN3; this interaction may act as an important modulator during neuronal differentiation. Interacts with VLDLR and LRP8. Post-translationally, proteolytically cleaved on its way through the secretory system, probably within the Golgi lumen. Proteolytic cleavage is not necessary for its chaperone activity. All non-secreted forms are not proteolytically cleaved. Chaperone activity of uncleaved forms is dependent on a non-reducing environment. This proteolytic maturation is disulfide bond formation dependent. In terms of processing, polyubiquitinated, leading to proteasomal degradation. Under cellular stress, the intracellular level of cleaved form is reduced due to proteasomal degradation. Heavily N-glycosylated. About 30% of the protein mass is comprised of complex N-linked carbohydrate. Endoplasmic reticulum (ER) stress induces changes in glycosylation status and increases level of hypoglycosylated forms. Core carbohydrates are essential for chaperone activity. Non-secreted forms are hypoglycosylated or unglycosylated.

It is found in the secreted. The protein localises to the nucleus. Its subcellular location is the cytoplasm. It localises to the mitochondrion membrane. The protein resides in the cytosol. It is found in the microsome. The protein localises to the endoplasmic reticulum. Its subcellular location is the mitochondrion. It localises to the perinuclear region. The protein resides in the cytoplasmic vesicle. It is found in the secretory vesicle. The protein localises to the chromaffin granule. Functions as extracellular chaperone that prevents aggregation of non native proteins. Prevents stress-induced aggregation of blood plasma proteins. Inhibits formation of amyloid fibrils by APP, APOC2, B2M, CALCA, CSN3, SNCA and aggregation-prone LYZ variants (in vitro). Does not require ATP. Maintains partially unfolded proteins in a state appropriate for subsequent refolding by other chaperones, such as HSPA8/HSC70. Does not refold proteins by itself. Binding to cell surface receptors triggers internalization of the chaperone-client complex and subsequent lysosomal or proteasomal degradation. When secreted, protects cells against apoptosis and against cytolysis by complement: inhibits assembly of the complement membrane attack complex (MAC) by preventing polymerization of C9 pore component of the MAC complex. Intracellular forms interact with ubiquitin and SCF (SKP1-CUL1-F-box protein) E3 ubiquitin-protein ligase complexes and promote the ubiquitination and subsequent proteasomal degradation of target proteins. Promotes proteasomal degradation of COMMD1 and IKBKB. Modulates NF-kappa-B transcriptional activity. Following stress, promotes apoptosis. Inhibits apoptosis when associated with the mitochondrial membrane by interference with BAX-dependent release of cytochrome c into the cytoplasm. Plays a role in the regulation of cell proliferation. An intracellular form suppresses stress-induced apoptosis by stabilizing mitochondrial membrane integrity through interaction with HSPA5. Secreted form does not affect caspase or BAX-mediated intrinsic apoptosis and TNF-induced NF-kappa-B-activity. Secreted form act as an important modulator during neuronal differentiation through interaction with STMN3. Plays a role in the clearance of immune complexes that arise during cell injury. This Canis lupus familiaris (Dog) protein is Clusterin (CLU).